An 82-amino-acid polypeptide reads, in one-letter code: Small ribosomal subunit protein bS16 (82 aa).

It belongs to the bacterial ribosomal protein bS16 family.

The protein is Small ribosomal subunit protein bS16 of Clostridium botulinum (strain Okra / Type B1).